The primary structure comprises 855 residues: Protein translocase subunit SecA (855 aa).

ATP-binding positions include Q85, G103–T107, and D492. The interval A794–K845 is disordered. The segment covering S801–N811 has biased composition (low complexity). The Zn(2+) site is built by C839, C841, C850, and C851.

This sequence belongs to the SecA family. As to quaternary structure, monomer and homodimer. Part of the essential Sec protein translocation apparatus which comprises SecA, SecYEG and auxiliary proteins SecDF. Other proteins may also be involved. Zn(2+) serves as cofactor.

It localises to the cell membrane. The protein localises to the cytoplasm. It catalyses the reaction ATP + H2O + cellular proteinSide 1 = ADP + phosphate + cellular proteinSide 2.. Functionally, part of the Sec protein translocase complex. Interacts with the SecYEG preprotein conducting channel. Has a central role in coupling the hydrolysis of ATP to the transfer of proteins into and across the cell membrane, serving as an ATP-driven molecular motor driving the stepwise translocation of polypeptide chains across the membrane. The polypeptide is Protein translocase subunit SecA (Clostridium beijerinckii (strain ATCC 51743 / NCIMB 8052) (Clostridium acetobutylicum)).